A 136-amino-acid chain; its full sequence is MMPLSRSRLEFIATILQNVLNLGLLTLGLILVVFLGKETVHLADALFVPEQASKYELVEGLVIYFLYFEFIALIVKYFKSGLHFPLRYFVYIGITAIVRLIIVDHKTPMDVLLYPAAILLLVITLWLCNSNRLRRE.

The next 4 membrane-spanning stretches (helical) occupy residues 15–35 (ILQN…VVFL), 55–75 (YELV…ALIV), 83–103 (HFPL…LIIV), and 108–128 (PMDV…LWLC).

It belongs to the PsiE family.

It is found in the cell inner membrane. The polypeptide is Protein PsiE (Salmonella gallinarum (strain 287/91 / NCTC 13346)).